A 392-amino-acid polypeptide reads, in one-letter code: O-phospho-L-seryl-tRNA:Cys-tRNA synthase 1 (392 aa).

Residues 85–86 (AR), N190, and 213–215 (SGH) each bind pyridoxal 5'-phosphate. K216 carries the post-translational modification N6-(pyridoxal phosphate)lysine.

The protein belongs to the SepCysS family. In terms of assembly, homodimer. Interacts with SepRS. The cofactor is pyridoxal 5'-phosphate.

The catalysed reaction is O-phospho-L-seryl-tRNA(Cys) + hydrogen sulfide + H(+) = L-cysteinyl-tRNA(Cys) + phosphate. In terms of biological role, converts O-phospho-L-seryl-tRNA(Cys) (Sep-tRNA(Cys)) to L-cysteinyl-tRNA(Cys) (Cys-tRNA(Cys)). This chain is O-phospho-L-seryl-tRNA:Cys-tRNA synthase 1, found in Methanocorpusculum labreanum (strain ATCC 43576 / DSM 4855 / Z).